Consider the following 208-residue polypeptide: Outer-membrane lipoprotein carrier protein (208 aa).

The signal sequence occupies residues Met-1 to Ala-21.

Belongs to the LolA family. In terms of assembly, monomer.

Its subcellular location is the periplasm. Participates in the translocation of lipoproteins from the inner membrane to the outer membrane. Only forms a complex with a lipoprotein if the residue after the N-terminal Cys is not an aspartate (The Asp acts as a targeting signal to indicate that the lipoprotein should stay in the inner membrane). This chain is Outer-membrane lipoprotein carrier protein, found in Pseudomonas paraeruginosa (strain DSM 24068 / PA7) (Pseudomonas aeruginosa (strain PA7)).